We begin with the raw amino-acid sequence, 642 residues long: Envelope glycoprotein (642 aa).

Positions 1-34 (MESPTHPKPSKDKTLSWNLAFLVGILFTIDIGMA) are cleaved as a signal peptide. Residues 35-586 (NPSPHQIYNV…FNKSPWFTTL (552 aa)) lie on the Extracellular side of the membrane. Residues N43 and N58 are each glycosylated (N-linked (GlcNAc...) asparagine; by host). 2 disulfide bridges follow: C125-C147 and C139-C152. The disordered stretch occupies residues 233 to 283 (PPQAMGPNLVLPDQKPPSRQSQTGSKVATQRPQTNESAPRSVAPTTMGPKR). The segment covering 249–270 (PSRQSQTGSKVATQRPQTNESA) has biased composition (polar residues). N-linked (GlcNAc...) asparagine; by host glycosylation is found at N267, N302, and N307. Disulfide bonds link C312/C315, C312/C539, and C531/C538. Residues 312 to 315 (CWLC) carry the CXXC motif. N334, N374, N390, and N410 each carry an N-linked (GlcNAc...) asparagine; by host glycan. The tract at residues 448 to 468 (ISLTVALMLGGLTVGGIAAGV) is fusion peptide. Coiled coils occupy residues 476–525 (LETA…ILFL) and 535–571 (KEEC…SQQG). Residues 514-530 (LQNRRGLDILFLQEGGL) form an immunosuppression region. Positions 531–539 (CAALKEECC) match the CX6CC motif. The helical transmembrane segment at 587–607 (ISSIMGPLLILLLILLFGPCI) threads the bilayer. Residue C606 is the site of S-palmitoyl cysteine; by host attachment. Residues 608 to 642 (LNRLVQFVKDRISVVQALILTQQYQQIKQYDPDRP) are Cytoplasmic-facing.

As to quaternary structure, the mature envelope protein (Env) consists of a trimer of SU-TM heterodimers attached by a labile interchain disulfide bond. Post-translationally, specific enzymatic cleavages in vivo yield mature proteins. Envelope glycoproteins are synthesized as an inactive precursor that is N-glycosylated and processed likely by host cell furin or by a furin-like protease in the Golgi to yield the mature SU and TM proteins. The cleavage site between SU and TM requires the minimal sequence [KR]-X-[KR]-R. The R-peptide is released from the C-terminus of the cytoplasmic tail of the TM protein upon particle formation as a result of proteolytic cleavage by the viral protease. Cleavage of this peptide is required for TM to become fusogenic. The CXXC motif is highly conserved across a broad range of retroviral envelope proteins. It is thought to participate in the formation of a labile disulfide bond possibly with the CX6CC motif present in the transmembrane protein. Isomerization of the intersubunit disulfide bond to an SU intrachain disulfide bond is thought to occur upon receptor recognition in order to allow membrane fusion. In terms of processing, the transmembrane protein is palmitoylated. Post-translationally, the R-peptide is palmitoylated.

It localises to the virion membrane. Its subcellular location is the host cell membrane. Its function is as follows. The surface protein (SU) attaches the virus to the host cell by binding to its receptor. This interaction triggers the refolding of the transmembrane protein (TM) and is thought to activate its fusogenic potential by unmasking its fusion peptide. Fusion occurs at the host cell plasma membrane. In terms of biological role, the transmembrane protein (TM) acts as a class I viral fusion protein. Under the current model, the protein has at least 3 conformational states: pre-fusion native state, pre-hairpin intermediate state, and post-fusion hairpin state. During viral and target cell membrane fusion, the coiled coil regions (heptad repeats) assume a trimer-of-hairpins structure, positioning the fusion peptide in close proximity to the C-terminal region of the ectodomain. The formation of this structure appears to drive apposition and subsequent fusion of viral and target cell membranes. Membranes fusion leads to delivery of the nucleocapsid into the cytoplasm. In Felidae (cat family), this protein is Envelope glycoprotein (env).